The following is a 153-amino-acid chain: Ribosome maturation factor RimP (153 aa).

Belongs to the RimP family.

It is found in the cytoplasm. Required for maturation of 30S ribosomal subunits. This is Ribosome maturation factor RimP from Actinobacillus pleuropneumoniae serotype 5b (strain L20).